Consider the following 519-residue polypeptide: Methionine--tRNA ligase (519 aa).

Positions 11–21 (AYPNAAPHVGH) match the 'HIGH' region motif. A 'KMSKS' region motif is present at residues 299–303 (KMSKS). Position 302 (K302) interacts with ATP. The tract at residues 500 to 519 (LPPPTGVFPRYQPPQPPEGK) is disordered.

It belongs to the class-I aminoacyl-tRNA synthetase family. MetG type 2B subfamily. As to quaternary structure, monomer.

The protein resides in the cytoplasm. It catalyses the reaction tRNA(Met) + L-methionine + ATP = L-methionyl-tRNA(Met) + AMP + diphosphate. Functionally, is required not only for elongation of protein synthesis but also for the initiation of all mRNA translation through initiator tRNA(fMet) aminoacylation. The protein is Methionine--tRNA ligase of Mycobacterium tuberculosis (strain ATCC 25618 / H37Rv).